Reading from the N-terminus, the 716-residue chain is Polyribonucleotide nucleotidyltransferase (716 aa).

Mg(2+)-binding residues include aspartate 485 and aspartate 491. The region spanning 552-611 (PKITTISVPKEKIRDVIGSGGKVIREIVEYSGAKVDIGDDGTVTIAASNDEQAQKAIARI) is the KH domain. One can recognise an S1 motif domain in the interval 621–689 (GRIYEGKVVK…DRGKVKLSMR (69 aa)).

This sequence belongs to the polyribonucleotide nucleotidyltransferase family. It depends on Mg(2+) as a cofactor.

Its subcellular location is the cytoplasm. The enzyme catalyses RNA(n+1) + phosphate = RNA(n) + a ribonucleoside 5'-diphosphate. In terms of biological role, involved in mRNA degradation. Catalyzes the phosphorolysis of single-stranded polyribonucleotides processively in the 3'- to 5'-direction. In Gluconobacter oxydans (strain 621H) (Gluconobacter suboxydans), this protein is Polyribonucleotide nucleotidyltransferase.